A 256-amino-acid chain; its full sequence is Ribonuclease 3-like protein 1 (256 aa).

In terms of domain architecture, RNase III spans 22 to 168; it reads AEVERALGGY…IVGAVYLDSK (147 aa). E65, D154, and E157 together coordinate Mg(2+).

Requires Mg(2+) as cofactor. It depends on Mn(2+) as a cofactor.

Its function is as follows. Cleaves double-stranded RNA (dsRNA). This chain is Ribonuclease 3-like protein 1, found in Oryza sativa subsp. japonica (Rice).